The sequence spans 453 residues: Homogentisate 1,2-dioxygenase (453 aa).

Histidine 306 functions as the Proton acceptor in the catalytic mechanism. Residues histidine 349 and glutamate 355 each coordinate Fe cation. 2 residues coordinate homogentisate: tyrosine 364 and histidine 385. Histidine 385 serves as a coordination point for Fe cation.

Belongs to the homogentisate dioxygenase family. As to quaternary structure, hexamer; dimer of trimers. It depends on Fe cation as a cofactor.

The enzyme catalyses homogentisate + O2 = 4-maleylacetoacetate + H(+). It functions in the pathway amino-acid degradation; L-phenylalanine degradation; acetoacetate and fumarate from L-phenylalanine: step 4/6. Its function is as follows. Involved in the catabolism of homogentisate (2,5-dihydroxyphenylacetate or 2,5-OH-PhAc), a central intermediate in the degradation of phenylalanine and tyrosine. Catalyzes the oxidative ring cleavage of the aromatic ring of homogentisate to yield maleylacetoacetate. The chain is Homogentisate 1,2-dioxygenase from Rhizobium etli (strain CIAT 652).